The primary structure comprises 200 residues: V-set and transmembrane domain-containing protein 5 (200 aa).

Residues 1–28 (MRPLPSGRRKTRGISLGLFALCLAAARC) form the signal peptide. The Extracellular portion of the chain corresponds to 29-147 (LQSQGVSLYI…VSEILYEDLH (119 aa)). The Ig-like C2-type domain occupies 37–139 (YIPQATINAT…QFGTIVLHVS (103 aa)). N-linked (GlcNAc...) asparagine glycosylation is present at N102. A helical transmembrane segment spans residues 148–168 (FVAVILAFLAAVAAVLISLMW). At 169-200 (VCNKCAYKFQRKRRHKLKESTTEEIELEDVEC) the chain is on the cytoplasmic side. The important for CDC42-dependent filopodia induction stretch occupies residues 170 to 186 (CNKCAYKFQRKRRHKLK).

Can homooligomerize through cis interactions within the same cell membrane. In terms of processing, N-glycosylated.

It localises to the cell membrane. It is found in the cell projection. The protein resides in the dendrite. Its subcellular location is the axon. Functionally, cell adhesion-like membrane protein of the central nervous system (CNS) which modulates both the position and complexity of central neurons by altering their membrane morphology and dynamics. Involved in the formation of neuronal dendrites and protrusions including dendritic filopodia. In synaptogenesis, regulates synapse formation by altering dendritic spine morphology and actin distribution. Promotes formation of unstable neuronal spines such as thin and branched types. Regulates neuronal morphogenesis and migration during cortical development in the brain. The protein is V-set and transmembrane domain-containing protein 5 (VSTM5) of Homo sapiens (Human).